The primary structure comprises 718 residues: Polyribonucleotide nucleotidyltransferase (718 aa).

Residues aspartate 496 and aspartate 502 each contribute to the Mg(2+) site. Residues 563–622 (PRLLTIKIDPDMIGLVIGPGGKTIKGITEETGAKIDIEDDGTVTISAVDENKAKRARNIV) enclose the KH domain. In terms of domain architecture, S1 motif spans 632 to 700 (GDVYAGRVTR…NKGRINLTRL (69 aa)).

The protein belongs to the polyribonucleotide nucleotidyltransferase family. It depends on Mg(2+) as a cofactor.

It is found in the cytoplasm. It carries out the reaction RNA(n+1) + phosphate = RNA(n) + a ribonucleoside 5'-diphosphate. Its function is as follows. Involved in mRNA degradation. Catalyzes the phosphorolysis of single-stranded polyribonucleotides processively in the 3'- to 5'-direction. The polypeptide is Polyribonucleotide nucleotidyltransferase (Trichormus variabilis (strain ATCC 29413 / PCC 7937) (Anabaena variabilis)).